A 548-amino-acid chain; its full sequence is Polynucleotide 5'-hydroxyl-kinase nol-9 (548 aa).

ATP is bound at residue glycine 186–serine 193.

Belongs to the Clp1 family. NOL9/GRC3 subfamily.

It localises to the nucleus. Its subcellular location is the nucleolus. In terms of biological role, polynucleotide 5'-kinase involved in rRNA processing. The sequence is that of Polynucleotide 5'-hydroxyl-kinase nol-9 (nol-9) from Caenorhabditis briggsae.